Consider the following 126-residue polypeptide: Large ribosomal subunit protein eL32 (126 aa).

It belongs to the eukaryotic ribosomal protein eL32 family.

This is Large ribosomal subunit protein eL32 from Thermococcus onnurineus (strain NA1).